We begin with the raw amino-acid sequence, 363 residues long: MITLGFMSLSRQHEADYSAELAKRAPEFGIRFIRFTPFDISPDTLRVKASVYHSASSTWNETEMAIPDYIYDRCFYGKDSHSQKAKPIVEWLKKYPKTEFIGRGLPDKWTVLHDLQQHSVINPYIPETIKVSRYEQIHSFLSKEKACILKPAFGAGGRGVILLKLGKKNITATYHIGKDKQTKTFSNQTSFKTWCKKVLQHQYLLQPYLNIQDKEQYPCDIRLFMEKNEAGEWNTVGKAVRRGYKHGLLANLSGGSDALTFDSWFEDIPKKQQVVLLDDVFSITQSVPYYLDERYGPLFELGLDICLAKDGRIWILDINSKPGRKSILRVSPEQKEQLYTCPLKRCQYLFSEQSQKGVLPRES.

It belongs to the YheC/YheD family.

The protein resides in the forespore outer membrane. It localises to the spore coat. Its function is as follows. Involved in sporulation. This Bacillus subtilis (strain 168) protein is Endospore coat-associated protein YheC (yheC).